The following is a 76-amino-acid chain: High-potential iron-sulfur protein isozyme 2 (76 aa).

The [4Fe-4S] cluster site is built by Cys38, Cys41, Cys54, and Cys70.

This sequence belongs to the high-potential iron-sulfur protein (HiPIP) family. Homodimer.

In terms of biological role, specific class of high-redox-potential 4Fe-4S ferredoxins. Functions in anaerobic electron transport in most purple and in some other photosynthetic bacteria and in at least one genus (Paracoccus) of halophilic, denitrifying bacteria. This chain is High-potential iron-sulfur protein isozyme 2 (hip2), found in Halorhodospira halophila (Ectothiorhodospira halophila).